Here is a 2275-residue protein sequence, read N- to C-terminus: Multifunctional protein pyrABCN (2275 aa).

The GATase (Glutamine amidotransferase) stretch occupies residues Met-1–Phe-440. L-glutamine-binding residues include Ser-102, Gly-313, and Gly-315. Residues Arg-265–Ser-453 form the Glutamine amidotransferase type-1 domain. Cys-342 serves as the catalytic Nucleophile; for GATase activity. Leu-343, Gln-346, Asn-384, Gly-386, and Tyr-387 together coordinate L-glutamine. Residues His-426 and Glu-428 each act as for GATase activity in the active site. The interval Asp-441–Lys-482 is linker. Residues Val-483–Ile-1522 are CPSase (Carbamoyl-phosphate synthase). Positions 600, 640, 646, 647, 677, 679, 684, 710, 711, 712, 753, and 767 each coordinate ATP. 2 ATP-grasp domains span residues Ala-604–Leu-796 and Ser-1139–Ile-1330. 3 residues coordinate Mg(2+): Gln-753, Glu-767, and Asn-769. Gln-753, Glu-767, and Asn-769 together coordinate Mn(2+). Positions 1175, 1214, 1216, 1221, 1246, 1247, 1248, 1249, 1289, and 1301 each coordinate ATP. Residues Gln-1289, Glu-1301, and Asn-1303 each contribute to the Mg(2+) site. Mn(2+) contacts are provided by Gln-1289, Glu-1301, and Asn-1303. Residues Phe-1396–Ser-1575 enclose the MGS-like domain. Residues Glu-1523–Asn-1532 are linker. The defective DHOase domain stretch occupies residues Val-1533–Ser-1862. The disordered stretch occupies residues Glu-1863–Ala-1882. Positions Glu-1863 to Lys-1953 are linker. The interval Gln-1954 to Met-2258 is ATCase (Aspartate transcarbamylase). Arg-2006 and Thr-2007 together coordinate carbamoyl phosphate. Lys-2034 is a binding site for L-aspartate. The carbamoyl phosphate site is built by Arg-2055, His-2083, and Gln-2086. L-aspartate is bound by residues Arg-2116 and Arg-2178. Residues Leu-2217 and Pro-2218 each contribute to the carbamoyl phosphate site.

The protein in the central section; belongs to the metallo-dependent hydrolases superfamily. DHOase family. CAD subfamily. It in the N-terminal section; belongs to the CarA family. In the 2nd section; belongs to the CarB family. This sequence in the 3rd section; belongs to the metallo-dependent hydrolases superfamily. DHOase family. CAD subfamily. The protein in the C-terminal section; belongs to the aspartate/ornithine carbamoyltransferase superfamily. ATCase family. It depends on Mg(2+) as a cofactor. The cofactor is Mn(2+).

The catalysed reaction is hydrogencarbonate + L-glutamine + 2 ATP + H2O = carbamoyl phosphate + L-glutamate + 2 ADP + phosphate + 2 H(+). It catalyses the reaction L-glutamine + H2O = L-glutamate + NH4(+). It carries out the reaction hydrogencarbonate + NH4(+) + 2 ATP = carbamoyl phosphate + 2 ADP + phosphate + 2 H(+). The enzyme catalyses carbamoyl phosphate + L-aspartate = N-carbamoyl-L-aspartate + phosphate + H(+). It participates in pyrimidine metabolism; UMP biosynthesis via de novo pathway; (S)-dihydroorotate from bicarbonate: step 1/3. Its pathway is pyrimidine metabolism; UMP biosynthesis via de novo pathway; (S)-dihydroorotate from bicarbonate: step 2/3. Functionally, multifunctional protein that encodes the first 2 enzymatic activities of the de novo pyrimidine pathway: carbamoylphosphate synthetase (CPSase; EC 6.3.5.5) and aspartate transcarbamylase (ATCase; EC 2.1.3.2). The CPSase-function is accomplished in 2 steps, by a glutamine-dependent amidotransferase activity (GATase) that binds and cleaves glutamine to produce ammonia, followed by an ammonium-dependent carbamoyl phosphate synthetase, which reacts with the ammonia, hydrogencarbonate and ATP to form carbamoyl phosphate. The endogenously produced carbamoyl phosphate is sequestered and channeled to the ATCase active site. ATCase then catalyzes the formation of carbamoyl-L-aspartate from L-aspartate and carbamoyl phosphate. The polypeptide is Multifunctional protein pyrABCN (Emericella nidulans (strain FGSC A4 / ATCC 38163 / CBS 112.46 / NRRL 194 / M139) (Aspergillus nidulans)).